The following is a 2313-amino-acid chain: Histone-lysine N-methyltransferase Set2 (2313 aa).

Disordered stretches follow at residues 1–115 (MEES…ASTS), 179–442 (AVGG…EETF), 550–858 (EPPL…LKAK), 883–1106 (RLDE…KKAL), 1118–1150 (ETES…PFGD), and 1163–1251 (KRDK…SQGR). Residues 17–29 (GRGRGRPPKVALS) constitute a DNA-binding region (a.T hook 1). Positions 73 to 82 (IKFDVRDLLN) are enriched in basic and acidic residues. Positions 101–115 (STGHSQSGTTAASTS) are enriched in low complexity. Positions 197-209 (PRKRGRPRKSQLA) form a DNA-binding region, a.T hook 2. The segment covering 221–241 (SCSDSDTNSTSTTTSNMSSDS) has biased composition (low complexity). The span at 252 to 265 (PKSKLRVSLKRLKL) shows a compositional bias: basic residues. Positions 266-288 (GGRLESSDSGNSPSSSSPEVEPP) are enriched in low complexity. Over residues 330-345 (ESPKGEEEQEEGRPVE) the composition is skewed to basic and acidic residues. 3 stretches are compositionally biased toward acidic residues: residues 347–356 (EPQDLIDIDM), 365–375 (PDPEEDLDEIM), and 388–398 (ADDEAEEEEDA). T404 is modified (phosphothreonine). The segment covering 412–433 (ADSCSSAPRRSRRSAPLSGSSR) has biased composition (low complexity). Basic and acidic residues predominate over residues 552 to 563 (PLKDESDPKQTE). The span at 659 to 671 (EDYESNQEQVAED) shows a compositional bias: acidic residues. A compositionally biased stretch (polar residues) spans 676-685 (CNNQKGQKQT). Composition is skewed to basic and acidic residues over residues 689–708 (EMKE…EKAM), 719–732 (VDKK…EKKV), 740–749 (VPEKKMDSKK), and 758–782 (KQKE…KSSA). 2 positions are modified to phosphoserine: S786 and S788. 3 stretches are compositionally biased toward polar residues: residues 800–833 (AQWS…SNQP), 918–928 (KSLSGKTSLRR), and 938–955 (LERN…NTSA). Basic residues predominate over residues 959–969 (KPSKVKKKINP). Positions 997–1010 (SSPVSTSSDSSSKR) are enriched in low complexity. A compositionally biased stretch (basic and acidic residues) spans 1016–1039 (TTSDLDGGSKLDQRRYTICEDRQP). 2 stretches are compositionally biased toward low complexity: residues 1085 to 1097 (SRQN…SSAS) and 1118 to 1127 (ETESSESTSS). A compositionally biased stretch (basic and acidic residues) spans 1163–1183 (KRDKVDEDQRKEGQDEVKREA). Positions 1199–1213 (TPATTPTPSPTQSNP) are enriched in low complexity. Residues 1307 to 1360 (NAEMQCDCFLTGDEEAQGHLSCGAGCINRMLMIECGPLCSNGARCTNKRFQQHQ) enclose the AWS domain. Zn(2+) contacts are provided by C1312, C1314, C1328, C1332, C1341, C1345, and C1351. An SET domain is found at 1362–1479 (WPCRVFRTEK…PGEEITFDYQ (118 aa)). Residues 1415-1417 (HYY) and 1440-1441 (NH) each bind S-adenosyl-L-methionine. C1443 is a binding site for Zn(2+). A Post-SET domain is found at 1486–1502 (DAQRCYCEAANCRGWIG). Q1488 is a binding site for S-adenosyl-L-methionine. C1490 is a Zn(2+) binding site. Y1491 contributes to the S-adenosyl-L-methionine binding site. Zn(2+) is bound by residues C1492 and C1497. Disordered stretches follow at residues 1501–1598 (IGGE…KPKV) and 1763–1860 (MKEH…RRTL). Residues 1505-1534 (PDSDEGEQLDEESDSDAEMDEEELEAEPEE) show a composition bias toward acidic residues. A compositionally biased stretch (basic residues) spans 1539-1551 (KSAKAKAKSKLKA). 3 stretches are compositionally biased toward basic and acidic residues: residues 1564-1574 (QTKPKDREYKA), 1763-1774 (MKEHEREADRQQ), and 1784-1806 (EDQR…RDTT). The span at 1817–1832 (SGNNTICTITTQQKGS) shows a compositional bias: polar residues. Positions 1840 to 1860 (TRNDNRRRSDIGPPSEQRRTL) are enriched in basic and acidic residues. The 34-residue stretch at 1963 to 1996 (DPLPPAWNWQVTSDGDIYYYNLRERISQWEPPSP) folds into the WW domain. 2 positions are modified to phosphoserine: S2130 and S2131. Residues 2177 to 2218 (LGTVGKRKLPMPPSVTVKKHRQEQRSKKVKSSQSPLTATSAR) form a disordered region. Positions 2193–2206 (VKKHRQEQRSKKVK) are enriched in basic residues. The span at 2207 to 2216 (SSQSPLTATS) shows a compositional bias: polar residues.

The protein belongs to the class V-like SAM-binding methyltransferase superfamily. Histone-lysine methyltransferase family. SET2 subfamily. Interacts with (phosphorylated) Polr2A.

It is found in the nucleus. The protein localises to the chromosome. It catalyses the reaction L-lysyl(36)-[histone H3] + 3 S-adenosyl-L-methionine = N(6),N(6),N(6)-trimethyl-L-lysyl(36)-[histone H3] + 3 S-adenosyl-L-homocysteine + 3 H(+). Its function is as follows. Histone methyltransferase that specifically trimethylates 'Lys-36' of histone H3 (H3K36me3). Represents the main enzyme generating H3K36me3, a specific tag for epigenetic transcriptional activation. Involved in dosage compensation in males (X chromosome dosage compensation) by mediating formation of H3K36me3, a mark recognized by msl-3 component of the MSL complex. In addition to its role in dosage compensation in males, promotes germline stem cell differentiation in females: catalyzes formation of H3K36me3, promoting recruitment of msl-3 and subsequent recruitment of the ATAC complex, leading to transcription of genes, such as RpS19b. In Drosophila melanogaster (Fruit fly), this protein is Histone-lysine N-methyltransferase Set2.